The chain runs to 437 residues: Adenylosuccinate synthetase (437 aa).

Residues 12–18 (GDEGKGK) and 40–42 (GHT) each bind GTP. The active-site Proton acceptor is Asp13. Residues Asp13 and Gly40 each contribute to the Mg(2+) site. Residues 13-16 (DEGK), 38-41 (NAGH), Thr128, Arg142, Gln223, Thr238, and Arg302 contribute to the IMP site. Residue His41 is the Proton donor of the active site. 298–304 (TTTGRRR) is a binding site for substrate. Residues Arg304, 330–332 (KLD), and 412–414 (SLG) contribute to the GTP site.

Belongs to the adenylosuccinate synthetase family. As to quaternary structure, homodimer. Mg(2+) serves as cofactor.

It is found in the cytoplasm. It carries out the reaction IMP + L-aspartate + GTP = N(6)-(1,2-dicarboxyethyl)-AMP + GDP + phosphate + 2 H(+). It participates in purine metabolism; AMP biosynthesis via de novo pathway; AMP from IMP: step 1/2. In terms of biological role, plays an important role in the de novo pathway of purine nucleotide biosynthesis. Catalyzes the first committed step in the biosynthesis of AMP from IMP. The protein is Adenylosuccinate synthetase of Synechococcus sp. (strain RCC307).